A 136-amino-acid polypeptide reads, in one-letter code: Large-conductance mechanosensitive channel (136 aa).

Topologically, residues 1-16 (MGLLSEFKAFAVKGNV) are cytoplasmic. Residues 17 to 45 (VDMAVGIIIGAAFGKIVSSFVGDVIMPPI) traverse the membrane as a helical segment. Over 46–73 (GLLIGGVDFSDLAITLKAEGDVPAVVLA) the chain is Extracellular. The helical transmembrane segment at 74-93 (YRKFIQTVLNFVIVAFAIFM) threads the bilayer. Residues 94–136 (GVKAINRLKREEAVAPSEPPVPSAEETLLTEIRDLLKAQQNKS) lie on the Cytoplasmic side of the membrane.

This sequence belongs to the MscL family. In terms of assembly, homopentamer.

It localises to the cell inner membrane. Functionally, channel that opens in response to stretch forces in the membrane lipid bilayer. Forms a nonselective ion channel with a conductance of about 4 nanosiemens. May participate in the regulation of osmotic pressure changes within the cell. In Pseudomonas fluorescens, this protein is Large-conductance mechanosensitive channel.